Reading from the N-terminus, the 349-residue chain is GTP 3',8-cyclase (349 aa).

Residues 24-249 form the Radical SAM core domain; the sequence is PFGRAITYLR…VDSDYQTGGP (226 aa). Position 33 (Arg-33) interacts with GTP. [4Fe-4S] cluster-binding residues include Cys-40 and Cys-44. Residue Tyr-46 coordinates S-adenosyl-L-methionine. Cys-47 provides a ligand contact to [4Fe-4S] cluster. Arg-82 lines the GTP pocket. Gly-86 contacts S-adenosyl-L-methionine. Thr-116 contacts GTP. Residue Ser-140 coordinates S-adenosyl-L-methionine. Lys-176 provides a ligand contact to GTP. Met-210 serves as a coordination point for S-adenosyl-L-methionine. Residues Cys-273 and Cys-276 each coordinate [4Fe-4S] cluster. Position 278-280 (278-280) interacts with GTP; the sequence is RVR. A [4Fe-4S] cluster-binding site is contributed by Cys-290.

It belongs to the radical SAM superfamily. MoaA family. In terms of assembly, monomer and homodimer. The cofactor is [4Fe-4S] cluster.

It catalyses the reaction GTP + AH2 + S-adenosyl-L-methionine = (8S)-3',8-cyclo-7,8-dihydroguanosine 5'-triphosphate + 5'-deoxyadenosine + L-methionine + A + H(+). The protein operates within cofactor biosynthesis; molybdopterin biosynthesis. Its function is as follows. Catalyzes the cyclization of GTP to (8S)-3',8-cyclo-7,8-dihydroguanosine 5'-triphosphate. In Agrobacterium fabrum (strain C58 / ATCC 33970) (Agrobacterium tumefaciens (strain C58)), this protein is GTP 3',8-cyclase.